Here is a 252-residue protein sequence, read N- to C-terminus: Type III pantothenate kinase (252 aa).

An ATP-binding site is contributed by 6 to 13 (DVGNTHTT). 104 to 107 (GADR) is a binding site for substrate. Residue D106 is the Proton acceptor of the active site. D126 lines the K(+) pocket. Residue T129 participates in ATP binding. T180 lines the substrate pocket.

Belongs to the type III pantothenate kinase family. In terms of assembly, homodimer. The cofactor is NH4(+). K(+) is required as a cofactor.

It is found in the cytoplasm. It carries out the reaction (R)-pantothenate + ATP = (R)-4'-phosphopantothenate + ADP + H(+). It functions in the pathway cofactor biosynthesis; coenzyme A biosynthesis; CoA from (R)-pantothenate: step 1/5. In terms of biological role, catalyzes the phosphorylation of pantothenate (Pan), the first step in CoA biosynthesis. This Fervidobacterium nodosum (strain ATCC 35602 / DSM 5306 / Rt17-B1) protein is Type III pantothenate kinase.